We begin with the raw amino-acid sequence, 241 residues long: Glucosamine-6-phosphate deaminase (241 aa).

Residue aspartate 67 is the Proton acceptor; for enolization step of the active site. Asparagine 136 serves as the catalytic For ring-opening step. Histidine 138 acts as the Proton acceptor; for ring-opening step in catalysis. Residue glutamate 143 is the For ring-opening step of the active site.

The protein belongs to the glucosamine/galactosamine-6-phosphate isomerase family. NagB subfamily.

It catalyses the reaction alpha-D-glucosamine 6-phosphate + H2O = beta-D-fructose 6-phosphate + NH4(+). Its pathway is amino-sugar metabolism; N-acetylneuraminate degradation; D-fructose 6-phosphate from N-acetylneuraminate: step 5/5. Functionally, catalyzes the reversible isomerization-deamination of glucosamine 6-phosphate (GlcN6P) to form fructose 6-phosphate (Fru6P) and ammonium ion. The chain is Glucosamine-6-phosphate deaminase from Clostridium novyi (strain NT).